The chain runs to 95 residues: Aspartyl/glutamyl-tRNA(Asn/Gln) amidotransferase subunit C (95 aa).

Residues 51 to 95 (PTSHATLTSSRLREDVTRPSLPPEKSLANAPAKSDTSFAVPKIIE) form a disordered region.

This sequence belongs to the GatC family. As to quaternary structure, heterotrimer of A, B and C subunits.

The enzyme catalyses L-glutamyl-tRNA(Gln) + L-glutamine + ATP + H2O = L-glutaminyl-tRNA(Gln) + L-glutamate + ADP + phosphate + H(+). The catalysed reaction is L-aspartyl-tRNA(Asn) + L-glutamine + ATP + H2O = L-asparaginyl-tRNA(Asn) + L-glutamate + ADP + phosphate + 2 H(+). In terms of biological role, allows the formation of correctly charged Asn-tRNA(Asn) or Gln-tRNA(Gln) through the transamidation of misacylated Asp-tRNA(Asn) or Glu-tRNA(Gln) in organisms which lack either or both of asparaginyl-tRNA or glutaminyl-tRNA synthetases. The reaction takes place in the presence of glutamine and ATP through an activated phospho-Asp-tRNA(Asn) or phospho-Glu-tRNA(Gln). This Myxococcus xanthus (strain DK1622) protein is Aspartyl/glutamyl-tRNA(Asn/Gln) amidotransferase subunit C.